The following is a 353-amino-acid chain: Photosystem II D2 protein (353 aa).

T2 carries the N-acetylthreonine modification. T2 is subject to Phosphothreonine. Residues C41–T61 form a helical membrane-spanning segment. Residue H118 coordinates chlorophyll a. A helical membrane pass occupies residues G125–P141. The pheophytin a site is built by Q130 and N143. Residues V153 to S166 traverse the membrane as a helical segment. A chlorophyll a-binding site is contributed by H198. The helical transmembrane segment at A208 to D228 threads the bilayer. Residues H215 and F262 each coordinate a plastoquinone. H215 serves as a coordination point for Fe cation. H269 provides a ligand contact to Fe cation. The helical transmembrane segment at G279–R295 threads the bilayer.

It belongs to the reaction center PufL/M/PsbA/D family. In terms of assembly, PSII is composed of 1 copy each of membrane proteins PsbA, PsbB, PsbC, PsbD, PsbE, PsbF, PsbH, PsbI, PsbJ, PsbK, PsbL, PsbM, PsbT, PsbX, PsbY, PsbZ, Psb30/Ycf12, at least 3 peripheral proteins of the oxygen-evolving complex and a large number of cofactors. It forms dimeric complexes. The cofactor is The D1/D2 heterodimer binds P680, chlorophylls that are the primary electron donor of PSII, and subsequent electron acceptors. It shares a non-heme iron and each subunit binds pheophytin, quinone, additional chlorophylls, carotenoids and lipids. There is also a Cl(-1) ion associated with D1 and D2, which is required for oxygen evolution. The PSII complex binds additional chlorophylls, carotenoids and specific lipids..

The protein localises to the plastid. It localises to the chloroplast thylakoid membrane. It catalyses the reaction 2 a plastoquinone + 4 hnu + 2 H2O = 2 a plastoquinol + O2. In terms of biological role, photosystem II (PSII) is a light-driven water:plastoquinone oxidoreductase that uses light energy to abstract electrons from H(2)O, generating O(2) and a proton gradient subsequently used for ATP formation. It consists of a core antenna complex that captures photons, and an electron transfer chain that converts photonic excitation into a charge separation. The D1/D2 (PsbA/PsbD) reaction center heterodimer binds P680, the primary electron donor of PSII as well as several subsequent electron acceptors. D2 is needed for assembly of a stable PSII complex. In Staurastrum punctulatum (Green alga), this protein is Photosystem II D2 protein.